Here is a 473-residue protein sequence, read N- to C-terminus: Ribulose bisphosphate carboxylase large chain (473 aa).

The substrate site is built by Asn116 and Thr166. Lys168 acts as the Proton acceptor in catalysis. Lys170 serves as a coordination point for substrate. Positions 194, 196, and 197 each coordinate Mg(2+). Lys194 carries the N6-carboxylysine modification. The active-site Proton acceptor is the His287. Arg288, His320, and Ser372 together coordinate substrate.

This sequence belongs to the RuBisCO large chain family. Type I subfamily. As to quaternary structure, heterohexadecamer of 8 large chains and 8 small chains. The cofactor is Mg(2+).

It carries out the reaction 2 (2R)-3-phosphoglycerate + 2 H(+) = D-ribulose 1,5-bisphosphate + CO2 + H2O. The enzyme catalyses D-ribulose 1,5-bisphosphate + O2 = 2-phosphoglycolate + (2R)-3-phosphoglycerate + 2 H(+). Functionally, ruBisCO catalyzes two reactions: the carboxylation of D-ribulose 1,5-bisphosphate, the primary event in carbon dioxide fixation, as well as the oxidative fragmentation of the pentose substrate. Both reactions occur simultaneously and in competition at the same active site. This Methylococcus capsulatus (strain ATCC 33009 / NCIMB 11132 / Bath) protein is Ribulose bisphosphate carboxylase large chain.